The chain runs to 199 residues: Thymidylate kinase (199 aa).

Residue 7–14 coordinates ATP; the sequence is GIDGSGKT.

Belongs to the thymidylate kinase family.

The enzyme catalyses dTMP + ATP = dTDP + ADP. Its function is as follows. Phosphorylation of dTMP to form dTDP in both de novo and salvage pathways of dTTP synthesis. This chain is Thymidylate kinase, found in Tropheryma whipplei (strain Twist) (Whipple's bacillus).